We begin with the raw amino-acid sequence, 156 residues long: MNVIKGVVAAPQARVAIAIARFNNFINDSLLGGAVDALERIGQVASENITVVWVPGAYELPLTVKTLVETQKYDAVVALGTVIRGGTAHFEYVAGECSSGLSSVAMASEIPVAFGVLTTESIEQAIERAGTKAGNKGAEAALTALEMVNVINAIKG.

Residues Phe22, 57 to 59, and 81 to 83 each bind 5-amino-6-(D-ribitylamino)uracil; these read AYE and TVI. (2S)-2-hydroxy-3-oxobutyl phosphate is bound at residue 86–87; the sequence is GT. His89 (proton donor) is an active-site residue. Phe114 contacts 5-amino-6-(D-ribitylamino)uracil. Arg128 serves as a coordination point for (2S)-2-hydroxy-3-oxobutyl phosphate.

Belongs to the DMRL synthase family. In terms of assembly, forms an icosahedral capsid composed of 60 subunits, arranged as a dodecamer of pentamers.

The enzyme catalyses (2S)-2-hydroxy-3-oxobutyl phosphate + 5-amino-6-(D-ribitylamino)uracil = 6,7-dimethyl-8-(1-D-ribityl)lumazine + phosphate + 2 H2O + H(+). It participates in cofactor biosynthesis; riboflavin biosynthesis; riboflavin from 2-hydroxy-3-oxobutyl phosphate and 5-amino-6-(D-ribitylamino)uracil: step 1/2. Functionally, catalyzes the formation of 6,7-dimethyl-8-ribityllumazine by condensation of 5-amino-6-(D-ribitylamino)uracil with 3,4-dihydroxy-2-butanone 4-phosphate. This is the penultimate step in the biosynthesis of riboflavin. The sequence is that of 6,7-dimethyl-8-ribityllumazine synthase from Photorhabdus laumondii subsp. laumondii (strain DSM 15139 / CIP 105565 / TT01) (Photorhabdus luminescens subsp. laumondii).